Reading from the N-terminus, the 600-residue chain is Proline--tRNA ligase (600 aa).

Belongs to the class-II aminoacyl-tRNA synthetase family. ProS type 1 subfamily. In terms of assembly, homodimer.

The protein resides in the cytoplasm. The catalysed reaction is tRNA(Pro) + L-proline + ATP = L-prolyl-tRNA(Pro) + AMP + diphosphate. Functionally, catalyzes the attachment of proline to tRNA(Pro) in a two-step reaction: proline is first activated by ATP to form Pro-AMP and then transferred to the acceptor end of tRNA(Pro). As ProRS can inadvertently accommodate and process non-cognate amino acids such as alanine and cysteine, to avoid such errors it has two additional distinct editing activities against alanine. One activity is designated as 'pretransfer' editing and involves the tRNA(Pro)-independent hydrolysis of activated Ala-AMP. The other activity is designated 'posttransfer' editing and involves deacylation of mischarged Ala-tRNA(Pro). The misacylated Cys-tRNA(Pro) is not edited by ProRS. This is Proline--tRNA ligase from Prochlorococcus marinus (strain MIT 9515).